A 626-amino-acid chain; its full sequence is Glyco-Gag protein (626 aa).

The Cytoplasmic portion of the chain corresponds to 1-66; sequence LGDVPGTSGA…SVWNRSRAAR (66 aa). Residues 67–86 form a helical membrane-spanning segment; sequence LVCCSIVLCCLCLTVFLYLS. Residues 87-626 are Extracellular-facing; the sequence is ENMGQAVTTP…PQASLLTLDD (540 aa). An N-linked (GlcNAc...) asparagine; by host glycan is attached at asparagine 113. 2 stretches are compositionally biased toward pro residues: residues 198-212 and 249-261; these read PPSA…PLST and DPPP…PPSP. Disordered regions lie at residues 198-306 and 522-626; these read PPSA…FPLR and RETP…TLDD. 2 stretches are compositionally biased toward basic and acidic residues: residues 522–554 and 574–607; these read RETP…EKER and RQDR…DCPK. Residues 526 to 566 adopt a coiled-coil conformation; that stretch reads EEREERIRRETEEKEERRRAEDVQREKERDRRRHREMSKLL. A CCHC-type zinc finger spans residues 590 to 607; it reads DQCAYCKEKGHWARDCPK.

Glycosylated by host. In terms of processing, cleaved by host near the middle of the molecule, releasing the c-terminal half containing capsid and nucleoprotein domains op GAG.

Its subcellular location is the host cell membrane. In terms of biological role, plays a role in viral particle release. Presumably acts by facilitating the fission of the virion bud at the cell surface. May prevent the antiviral activity of murine APOBEC3. This Mus musculus (Mouse) protein is Glyco-Gag protein.